Consider the following 312-residue polypeptide: Bark storage protein B (312 aa).

An N-terminal signal peptide occupies residues 1–24 (MPQQSMQASLRDPIAEIERSNCKI). N-linked (GlcNAc...) asparagine glycosylation is present at Asn70.

It to wound-inducible poplar endochitinases. In terms of assembly, monomer. In terms of tissue distribution, bark tissue.

Its function is as follows. May play a role in nitrogen storage. This chain is Bark storage protein B (BSP), found in Populus deltoides (Eastern poplar).